Reading from the N-terminus, the 133-residue chain is Agglutinin alpha chain (133 aa).

The 133-residue stretch at 1–133 (GVTFDDGAYT…LDYFSIYLSL (133 aa)) folds into the Jacalin-type lectin domain.

The protein belongs to the jacalin lectin family. As to quaternary structure, formed of four alpha chains and four beta chains.

Functionally, D-galactose-specific lectin, binds the T-antigen structure Gal-beta1,3-GalNAc. In Maclura pomifera (Osage orange), this protein is Agglutinin alpha chain.